We begin with the raw amino-acid sequence, 708 residues long: Lactotransferrin (708 aa).

A signal peptide spans methionine 1–alanine 19. Transferrin-like domains are found at residues valine 25–glutamate 352 and valine 364–glutamine 693. 2 disulfide bridges follow: cysteine 28–cysteine 64 and cysteine 38–cysteine 55. Aspartate 79 is a Fe(3+) binding site. Arginine 92 is a catalytic residue. Tyrosine 111 serves as a coordination point for Fe(3+). 5 disulfide bridges follow: cysteine 134–cysteine 217, cysteine 176–cysteine 192, cysteine 179–cysteine 202, cysteine 189–cysteine 200, and cysteine 250–cysteine 264. Threonine 136 provides a ligand contact to hydrogencarbonate. Asparagine 139 carries an N-linked (GlcNAc...) asparagine glycan. Residues arginine 140, alanine 142, and glycine 143 each coordinate hydrogencarbonate. Tyrosine 211 serves as a coordination point for Fe(3+). A Fe(3+)-binding site is contributed by histidine 272. Serine 278 serves as the catalytic Nucleophile. 2 disulfide bridges follow: cysteine 367–cysteine 399 and cysteine 377–cysteine 390. Asparagine 385 is a glycosylation site (N-linked (GlcNAc...) asparagine). Residues aspartate 414 and aspartate 452 each coordinate Fe(3+). Disulfide bonds link cysteine 476–cysteine 551, cysteine 510–cysteine 524, cysteine 521–cysteine 534, and cysteine 592–cysteine 606. Positions 478, 482, 484, and 485 each coordinate hydrogencarbonate. Asparagine 495 is a glycosylation site (N-linked (GlcNAc...) asparagine). Tyrosine 545 lines the Fe(3+) pocket. Histidine 614 is a binding site for Fe(3+).

This sequence belongs to the transferrin family. As to quaternary structure, monomer. Found in a complex with LTF, CLU, EPPIN and SEMG1. Interacts with prey activated coagulation factor X; the interaction inhibits coagulation factor X catalytic activity. Found in a complex with MPO and LTF; interacts directly with CP, allows Fe(3+) incorporation into LTF and activation of CP ferroxidase activity. Post-translationally, N-glycosylated. Glycosylation is important for draculin anticoagulant activity. Probably also O-glycosylated. Expressed in the submaxillary gland and secreted in the saliva (at protein level).

It is found in the secreted. In terms of biological role, transferrins are iron binding transport proteins which can bind two Fe(3+) ions in association with the binding of an anion, usually bicarbonate. Major iron-binding and multifunctional protein found in exocrine fluids such as breast milk and mucosal secretions. Has antimicrobial activity. Antimicrobial properties may include bacteriostasis, which is related to its ability to sequester free iron and thus inhibit microbial growth, as well as direct bactericidal properties leading to the release of lipopolysaccharides from the bacterial outer membrane. May have anabolic, differentiating and anti-apoptotic effects on osteoblasts and may also inhibit osteoclastogenesis, possibly playing a role in the regulation of bone growth. May interfere with the lipopolysaccharide (LPS)-stimulated TLR4 signaling. Its function is as follows. The lactotransferrin transferrin-like domain 1 functions as a serine protease of the peptidase S60 family that cuts arginine rich regions. This function contributes to the antimicrobial activity. Shows a preferential cleavage at -Arg-Ser-Arg-Arg-|- and -Arg-Arg-Ser-Arg-|-, and of Z-Phe-Arg-|-aminomethylcoumarin sites. Functionally, acts as an anticoagulant of the blood coagulation cascade of the bat's prey by inhibiting coagulation factor IX and activated coagulation factor X. The sequence is that of Lactotransferrin from Desmodus rotundus (Vampire bat).